Consider the following 367-residue polypeptide: Uroporphyrinogen decarboxylase (367 aa).

Met1 is modified (N-acetylmethionine). Coproporphyrinogen I contacts are provided by Arg37, Ala39, Arg41, Arg50, Asp86, Tyr164, Ser219, and His339. Residues Arg37, Ala39, and Arg41 each coordinate coproporphyrinogen III. The coproporphyrinogen III site is built by Asp86, Tyr164, Ser219, and His339.

Belongs to the uroporphyrinogen decarboxylase family. As to quaternary structure, homodimer.

Its subcellular location is the cytoplasm. The protein localises to the cytosol. The enzyme catalyses uroporphyrinogen III + 4 H(+) = coproporphyrinogen III + 4 CO2. It carries out the reaction uroporphyrinogen I + 4 H(+) = coproporphyrinogen I + 4 CO2. It participates in porphyrin-containing compound metabolism; protoporphyrin-IX biosynthesis; coproporphyrinogen-III from 5-aminolevulinate: step 4/4. Its function is as follows. Catalyzes the sequential decarboxylation of the four acetate side chains of uroporphyrinogen to form coproporphyrinogen and participates in the fifth step in the heme biosynthetic pathway. Isomer I or isomer III of uroporphyrinogen may serve as substrate, but only coproporphyrinogen III can ultimately be converted to heme. In vitro also decarboxylates pentacarboxylate porphyrinogen I. This chain is Uroporphyrinogen decarboxylase, found in Mus musculus (Mouse).